We begin with the raw amino-acid sequence, 127 residues long: Fumarate reductase subunit C (127 aa).

Helical transmembrane passes span 30-50, 67-87, and 107-127; these read ATVL…GSLV, VVIA…HTFF, and IIVL…LIVV.

This sequence belongs to the FrdC family. In terms of assembly, part of an enzyme complex containing four subunits: a flavoprotein (FrdA), an iron-sulfur protein (FrdB), and two hydrophobic anchor proteins (FrdC and FrdD).

Its subcellular location is the cell inner membrane. Its function is as follows. Anchors the catalytic components of the fumarate reductase complex to the cell membrane, binds quinones. The chain is Fumarate reductase subunit C from Vibrio vulnificus (strain CMCP6).